We begin with the raw amino-acid sequence, 270 residues long: tRNA pseudouridine synthase A (270 aa).

Aspartate 51 acts as the Nucleophile in catalysis. Tyrosine 109 serves as a coordination point for substrate.

This sequence belongs to the tRNA pseudouridine synthase TruA family. Homodimer.

The catalysed reaction is uridine(38/39/40) in tRNA = pseudouridine(38/39/40) in tRNA. Formation of pseudouridine at positions 38, 39 and 40 in the anticodon stem and loop of transfer RNAs. In Burkholderia vietnamiensis (strain G4 / LMG 22486) (Burkholderia cepacia (strain R1808)), this protein is tRNA pseudouridine synthase A.